The primary structure comprises 338 residues: MKNSADITVLGAGSYGTALAISLASNGHKTLLWGHDPAHMQTLAQDKCNQAFLPGIAFPECLHIEADLAKALAASNNVLVVVPSHVFGSVLAQAKPLLRQDARIVWATKGLEPETGRLLQDVARDVLGEQYPLAVLSGPTFAKELAMGLPTAISVAGTCPKFTAELVELLHSPKRLRVYANDDFIGLQLGGAVKNVIAIGAGMSDGIGFGANARTALITRGLVELTRLGEALGASTATFMGMAGLGDLVLTCTDNQSRNRRFGLALGKGCDVDTAQAEIGQVVEGYRNTKEVFTLAKRMGVEMPITEQIYQVLYQGKAPLDAAKELLSREKKSETPAQ.

NADPH contacts are provided by Ser14, Tyr15, His35, and Lys109. Sn-glycerol 3-phosphate-binding residues include Lys109, Gly138, and Thr140. An NADPH-binding site is contributed by Ala142. Lys194, Asp247, Ser257, Arg258, and Asn259 together coordinate sn-glycerol 3-phosphate. Catalysis depends on Lys194, which acts as the Proton acceptor. Arg258 contacts NADPH. Val282 and Glu284 together coordinate NADPH.

This sequence belongs to the NAD-dependent glycerol-3-phosphate dehydrogenase family.

The protein localises to the cytoplasm. The catalysed reaction is sn-glycerol 3-phosphate + NAD(+) = dihydroxyacetone phosphate + NADH + H(+). It carries out the reaction sn-glycerol 3-phosphate + NADP(+) = dihydroxyacetone phosphate + NADPH + H(+). The protein operates within membrane lipid metabolism; glycerophospholipid metabolism. Its function is as follows. Catalyzes the reduction of the glycolytic intermediate dihydroxyacetone phosphate (DHAP) to sn-glycerol 3-phosphate (G3P), the key precursor for phospholipid synthesis. The polypeptide is Glycerol-3-phosphate dehydrogenase [NAD(P)+] (Shewanella sp. (strain MR-4)).